We begin with the raw amino-acid sequence, 488 residues long: N-succinylglutamate 5-semialdehyde dehydrogenase (488 aa).

G221–G226 serves as a coordination point for NAD(+). Residues E244 and C278 contribute to the active site.

This sequence belongs to the aldehyde dehydrogenase family. AstD subfamily.

It carries out the reaction N-succinyl-L-glutamate 5-semialdehyde + NAD(+) + H2O = N-succinyl-L-glutamate + NADH + 2 H(+). It functions in the pathway amino-acid degradation; L-arginine degradation via AST pathway; L-glutamate and succinate from L-arginine: step 4/5. Functionally, catalyzes the NAD-dependent reduction of succinylglutamate semialdehyde into succinylglutamate. In Pseudomonas fluorescens (strain SBW25), this protein is N-succinylglutamate 5-semialdehyde dehydrogenase.